Here is a 97-residue protein sequence, read N- to C-terminus: MKIVKEALAGTAESSDLMVKIAPAAGELEIEIYSDVIKQFGDQIRRVVKETLAAMEVYEGLVIIEDKGALDCVIRARLQSAVLRACEAQPLRWEALK.

O-(phosphoribosyl dephospho-coenzyme A)serine is present on S14.

The protein belongs to the CitD family. Oligomer with a subunit composition of (alpha,beta,gamma)6.

It is found in the cytoplasm. Functionally, covalent carrier of the coenzyme of citrate lyase. This Cronobacter sakazakii (strain ATCC BAA-894) (Enterobacter sakazakii) protein is Citrate lyase acyl carrier protein.